The following is a 43-amino-acid chain: Defensin (43 aa).

3 disulfide bridges follow: Cys-3–Cys-34, Cys-20–Cys-39, and Cys-24–Cys-41.

The protein resides in the secreted. Functionally, antibacterial peptide active against Gram-positive and Gram-negative bacteria. The polypeptide is Defensin (Palomena prasina (Green shield bug)).